A 364-amino-acid polypeptide reads, in one-letter code: DNA replication and repair protein RecF (364 aa).

30 to 37 (GNNAQGKT) is an ATP binding site.

Belongs to the RecF family.

It is found in the cytoplasm. The RecF protein is involved in DNA metabolism; it is required for DNA replication and normal SOS inducibility. RecF binds preferentially to single-stranded, linear DNA. It also seems to bind ATP. The sequence is that of DNA replication and repair protein RecF from Clostridium botulinum (strain Loch Maree / Type A3).